Consider the following 222-residue polypeptide: MKLEFIGHGCVQLSEGDDKIIFDPFIDDNPVAKISSSDVSPNYILLTHYHDDHKGDALEIAKDNDSLLISTAEIAGAAEQKGVKAHPMHIGGTKEFDFGKVRVTPALHGSGIDGGLACGFVVDFHGKKVYHAGDTGLFSDMKLISELEEIDIAILPIGGNFTMGAEEAVMATQYLKPKAVMPVHYNTWPLIPADDEQFKKDIQEKTNSECFVLEPGDSMEMN.

The protein belongs to the UPF0173 family.

The polypeptide is UPF0173 metal-dependent hydrolase Nther_2337 (Natranaerobius thermophilus (strain ATCC BAA-1301 / DSM 18059 / JW/NM-WN-LF)).